The chain runs to 396 residues: Maltose/maltodextrin-binding periplasmic protein (396 aa).

The N-terminal stretch at 1–26 (MKIKTGARILALSALTTMMFSASALA) is a signal peptide.

This sequence belongs to the bacterial solute-binding protein 1 family. In terms of assembly, the complex is composed of two ATP-binding proteins (MalK), two transmembrane proteins (MalG and MalF) and a solute-binding protein (MalE).

The protein localises to the periplasm. Functionally, part of the ABC transporter complex MalEFGK involved in maltose/maltodextrin import. Binds maltose and higher maltodextrins. This Escherichia coli O157:H7 protein is Maltose/maltodextrin-binding periplasmic protein (malE).